Reading from the N-terminus, the 475-residue chain is ATP-dependent rRNA helicase RRP3 (475 aa).

Positions 30–59 (ALKQKKQAPVTEKPEEIVETTSEASQDVNS) are disordered. Positions 48–59 (ETTSEASQDVNS) are enriched in polar residues. The short motif at 64–92 (HTFSELNLVPELMEAIEKLKYTKPTPIQS) is the Q motif element. One can recognise a Helicase ATP-binding domain in the interval 95-266 (IPHALEGKDI…RASLHEPVKV (172 aa)). 108-115 (AQTGSGKT) is a binding site for ATP. The DEAD box motif lies at 214-217 (DEAD). One can recognise a Helicase C-terminal domain in the interval 293–437 (FLIHLLNEFM…KDPSPPRDVL (145 aa)). The segment at 451–475 (AIKQTKDFHEKRTKKKRDDRDREER) is disordered.

This sequence belongs to the DEAD box helicase family. DDX47/RRP3 subfamily.

It is found in the nucleus. In terms of biological role, required for pre-ribosomal RNA processing. Involved in the maturation of the 35S-pre-rRNA and to its cleavage to mature 18S rRNA. In Meyerozyma guilliermondii (strain ATCC 6260 / CBS 566 / DSM 6381 / JCM 1539 / NBRC 10279 / NRRL Y-324) (Yeast), this protein is ATP-dependent rRNA helicase RRP3 (RRP3).